A 355-amino-acid chain; its full sequence is S-adenosylmethionine:tRNA ribosyltransferase-isomerase (355 aa).

The protein belongs to the QueA family. In terms of assembly, monomer.

The protein resides in the cytoplasm. It catalyses the reaction 7-aminomethyl-7-carbaguanosine(34) in tRNA + S-adenosyl-L-methionine = epoxyqueuosine(34) in tRNA + adenine + L-methionine + 2 H(+). Its pathway is tRNA modification; tRNA-queuosine biosynthesis. Functionally, transfers and isomerizes the ribose moiety from AdoMet to the 7-aminomethyl group of 7-deazaguanine (preQ1-tRNA) to give epoxyqueuosine (oQ-tRNA). The chain is S-adenosylmethionine:tRNA ribosyltransferase-isomerase from Burkholderia ambifaria (strain ATCC BAA-244 / DSM 16087 / CCUG 44356 / LMG 19182 / AMMD) (Burkholderia cepacia (strain AMMD)).